Reading from the N-terminus, the 310-residue chain is uncharacterized protein (310 aa).

Disordered stretches follow at residues 1–53 (MSNK…NKEM), 78–127 (PIEN…TITN), and 153–217 (QQPL…SQML). Over residues 11–25 (GEEDEEEDDLYDDYD) the composition is skewed to acidic residues. 2 stretches are compositionally biased toward polar residues: residues 37–49 (STSM…NISL) and 78–88 (PIENINENPSP). 3 stretches are compositionally biased toward low complexity: residues 94-126 (QTQQ…TTIT), 164-184 (PSPI…QYIT), and 192-208 (YQPI…QIPT). Positions 268–299 (DLIKSVQHNIRQYNDDILTLEEKLEQTEWSLQ) form a coiled coil.

This is an uncharacterized protein from Dictyostelium discoideum (Social amoeba).